Consider the following 452-residue polypeptide: Probable ECA polymerase (452 aa).

The next 11 membrane-spanning stretches (helical) occupy residues 6 to 26 (FSGL…LTWF), 37 to 57 (VFFS…TSVL), 63 to 83 (VGVA…CFYG), 118 to 138 (VILM…NGFL), 155 to 175 (GVAL…VYFL), 181 to 201 (AWLF…MIVG), 207 to 227 (IIIA…ISLW), 228 to 248 (MLAA…LKRY), 341 to 361 (LVVM…GLII), 378 to 398 (YKAA…IVLA), and 410 to 430 (VFFL…FWLF).

This sequence belongs to the WzyE family. As to quaternary structure, probably part of a complex composed of WzxE, WzyE and WzzE.

It localises to the cell inner membrane. Its pathway is bacterial outer membrane biogenesis; enterobacterial common antigen biosynthesis. Its function is as follows. Probably involved in the polymerization of enterobacterial common antigen (ECA) trisaccharide repeat units. The protein is Probable ECA polymerase of Salmonella choleraesuis (strain SC-B67).